The primary structure comprises 378 residues: MKILVDENMPYARDLFSRLGEVTAVPGRPIPVAQLADADALMVRSVTKVNESLLAGKPIKFVGTATAGTDHVDEAWLKQAGIGFSAAPGCNAIAVVEYVFSSLLMLAERDGFSLHDRTVGIVGVGNVGRRLQARLEALGIKTLLCDPPRVDRGDEGDFRSLDELVQHADILTFHTPLFKDGPYKTLHLADEKLIRSLKPGAILINACRGAVVDNTALLTCLNEGQKLSVVLDVWEGEPELNVELLTKVDIGTPHIAGYTLEGKARGTTQVFEAYSKFIGHEQHVALDTLLPAPEFGRITLHGPLDQPTLKRLVHLVYDVRRDDAPLRKVAGIPGEFDKLRKNYLERREWSSLYVICDDASAASLLCKLGFNAVHHPAR.

Substrate-binding residues include Ser45 and Thr66. Residues Asp146 and Thr175 each contribute to the NAD(+) site. Residue Arg208 is part of the active site. Asp232 provides a ligand contact to NAD(+). Glu237 is a catalytic residue. The Proton donor role is filled by His254. Gly257 is an NAD(+) binding site. Tyr258 is a substrate binding site.

It belongs to the D-isomer specific 2-hydroxyacid dehydrogenase family. PdxB subfamily. As to quaternary structure, homodimer.

The protein localises to the cytoplasm. It catalyses the reaction 4-phospho-D-erythronate + NAD(+) = (R)-3-hydroxy-2-oxo-4-phosphooxybutanoate + NADH + H(+). It functions in the pathway cofactor biosynthesis; pyridoxine 5'-phosphate biosynthesis; pyridoxine 5'-phosphate from D-erythrose 4-phosphate: step 2/5. In terms of biological role, catalyzes the oxidation of erythronate-4-phosphate to 3-hydroxy-2-oxo-4-phosphonooxybutanoate. The chain is Erythronate-4-phosphate dehydrogenase from Escherichia coli (strain 55989 / EAEC).